The sequence spans 253 residues: Tryptophan synthase alpha chain (253 aa).

Catalysis depends on proton acceptor residues glutamate 47 and aspartate 58.

The protein belongs to the TrpA family. As to quaternary structure, tetramer of two alpha and two beta chains.

It carries out the reaction (1S,2R)-1-C-(indol-3-yl)glycerol 3-phosphate + L-serine = D-glyceraldehyde 3-phosphate + L-tryptophan + H2O. The protein operates within amino-acid biosynthesis; L-tryptophan biosynthesis; L-tryptophan from chorismate: step 5/5. In terms of biological role, the alpha subunit is responsible for the aldol cleavage of indoleglycerol phosphate to indole and glyceraldehyde 3-phosphate. The sequence is that of Tryptophan synthase alpha chain from Syntrophotalea carbinolica (strain DSM 2380 / NBRC 103641 / GraBd1) (Pelobacter carbinolicus).